The following is a 442-amino-acid chain: Exodeoxyribonuclease 7 large subunit (442 aa).

It belongs to the XseA family. Heterooligomer composed of large and small subunits.

It localises to the cytoplasm. It carries out the reaction Exonucleolytic cleavage in either 5'- to 3'- or 3'- to 5'-direction to yield nucleoside 5'-phosphates.. Bidirectionally degrades single-stranded DNA into large acid-insoluble oligonucleotides, which are then degraded further into small acid-soluble oligonucleotides. The sequence is that of Exodeoxyribonuclease 7 large subunit from Shewanella sediminis (strain HAW-EB3).